The primary structure comprises 313 residues: Aspartate carbamoyltransferase catalytic subunit (313 aa).

The carbamoyl phosphate site is built by Arg58 and Thr59. Lys86 contributes to the L-aspartate binding site. Carbamoyl phosphate contacts are provided by Arg108, His136, and Gln139. Positions 169 and 223 each coordinate L-aspartate. Residues Gly264 and Pro265 each coordinate carbamoyl phosphate.

This sequence belongs to the aspartate/ornithine carbamoyltransferase superfamily. ATCase family. Heterododecamer (2C3:3R2) of six catalytic PyrB chains organized as two trimers (C3), and six regulatory PyrI chains organized as three dimers (R2).

The catalysed reaction is carbamoyl phosphate + L-aspartate = N-carbamoyl-L-aspartate + phosphate + H(+). It functions in the pathway pyrimidine metabolism; UMP biosynthesis via de novo pathway; (S)-dihydroorotate from bicarbonate: step 2/3. Functionally, catalyzes the condensation of carbamoyl phosphate and aspartate to form carbamoyl aspartate and inorganic phosphate, the committed step in the de novo pyrimidine nucleotide biosynthesis pathway. This Chlorobium luteolum (strain DSM 273 / BCRC 81028 / 2530) (Pelodictyon luteolum) protein is Aspartate carbamoyltransferase catalytic subunit.